Here is a 135-residue protein sequence, read N- to C-terminus: MTLTLRVLAPDQSVFDDTADEIILPSTTGLLGVLPGHISMVTAIDFGVLRVLKNGNWDSIALTGGFAEVESNEVTVLVNKAEMGKNIDSGKAEAELEKAKNQLSQNKDQGNSPEKIKAQETLNKAKAWFQASKSD.

Residues 89-100 (SGKAEAELEKAK) are compositionally biased toward basic and acidic residues. Residues 89–114 (SGKAEAELEKAKNQLSQNKDQGNSPE) form a disordered region. The span at 101-112 (NQLSQNKDQGNS) shows a compositional bias: polar residues.

It belongs to the ATPase epsilon chain family. F-type ATPases have 2 components, CF(1) - the catalytic core - and CF(0) - the membrane proton channel. CF(1) has five subunits: alpha(3), beta(3), gamma(1), delta(1), epsilon(1). CF(0) has three main subunits: a, b and c.

The protein resides in the cellular thylakoid membrane. In terms of biological role, produces ATP from ADP in the presence of a proton gradient across the membrane. The protein is ATP synthase epsilon chain of Prochlorococcus marinus (strain NATL2A).